Reading from the N-terminus, the 432-residue chain is Phosphomevalonate kinase (432 aa).

Residues K10 and 142-148 (VEKTGLG) contribute to the ATP site.

Belongs to the GHMP kinase family. Mevalonate kinase subfamily.

It localises to the cytoplasm. It catalyses the reaction (R)-5-phosphomevalonate + ATP = (R)-5-diphosphomevalonate + ADP. The protein operates within isoprenoid biosynthesis; isopentenyl diphosphate biosynthesis via mevalonate pathway; isopentenyl diphosphate from (R)-mevalonate: step 2/3. Phosphomevalonate kinase; part of the second module of ergosterol biosynthesis pathway that includes the middle steps of the pathway. ERG8 converts 5-phosphomevalonate to 5-diphosphomevalonate. The second module is carried out in the vacuole and involves the formation of farnesyl diphosphate, which is also an important intermediate in the biosynthesis of ubiquinone, dolichol, heme and prenylated proteins. Activity by the mevalonate kinase ERG12 first converts mevalonate into 5-phosphomevalonate. 5-phosphomevalonate is then further converted to 5-diphosphomevalonate by the phosphomevalonate kinase ERG8. The diphosphomevalonate decarboxylase MVD then produces isopentenyl diphosphate. The isopentenyl-diphosphate delta-isomerase IDI1 then catalyzes the 1,3-allylic rearrangement of the homoallylic substrate isopentenyl (IPP) to its highly electrophilic allylic isomer, dimethylallyl diphosphate (DMAPP). Finally the farnesyl diphosphate synthase ERG20 catalyzes the sequential condensation of isopentenyl pyrophosphate with dimethylallyl pyrophosphate, and then with the resultant geranylpyrophosphate to the ultimate product farnesyl pyrophosphate. The sequence is that of Phosphomevalonate kinase from Candida albicans (strain SC5314 / ATCC MYA-2876) (Yeast).